Here is a 140-residue protein sequence, read N- to C-terminus: Nucleoside diphosphate kinase (140 aa).

ATP-binding residues include K11, F59, R87, T93, R104, and N114. H117 serves as the catalytic Pros-phosphohistidine intermediate.

Belongs to the NDK family. As to quaternary structure, homotetramer. Mg(2+) is required as a cofactor.

It localises to the cytoplasm. The catalysed reaction is a 2'-deoxyribonucleoside 5'-diphosphate + ATP = a 2'-deoxyribonucleoside 5'-triphosphate + ADP. The enzyme catalyses a ribonucleoside 5'-diphosphate + ATP = a ribonucleoside 5'-triphosphate + ADP. In terms of biological role, major role in the synthesis of nucleoside triphosphates other than ATP. The ATP gamma phosphate is transferred to the NDP beta phosphate via a ping-pong mechanism, using a phosphorylated active-site intermediate. The chain is Nucleoside diphosphate kinase from Beijerinckia indica subsp. indica (strain ATCC 9039 / DSM 1715 / NCIMB 8712).